The primary structure comprises 586 residues: A-type ATP synthase subunit A (586 aa).

Residue 232 to 239 (GPFGSGKT) coordinates ATP.

The protein belongs to the ATPase alpha/beta chains family. Has multiple subunits with at least A(3), B(3), C, D, E, F, H, I and proteolipid K(x).

It localises to the cell membrane. The catalysed reaction is ATP + H2O + 4 H(+)(in) = ADP + phosphate + 5 H(+)(out). In terms of biological role, component of the A-type ATP synthase that produces ATP from ADP in the presence of a proton gradient across the membrane. The A chain is the catalytic subunit. The protein is A-type ATP synthase subunit A of Methanococcus maripaludis (strain DSM 14266 / JCM 13030 / NBRC 101832 / S2 / LL).